The sequence spans 328 residues: L-lactate dehydrogenase (328 aa).

NAD(+) contacts are provided by residues V18, E39, K46, Y71, and 85–86; that span reads GA. Substrate contacts are provided by Q88 and R94. NAD(+) contacts are provided by residues S107, 124–126, and S149; that span reads AAN. 126 to 129 serves as a coordination point for substrate; sequence NPVD. Residue 154-157 participates in substrate binding; that stretch reads DTAR. Beta-D-fructose 1,6-bisphosphate contacts are provided by R159 and H174. H181 serves as the catalytic Proton acceptor. The residue at position 226 (Y226) is a Phosphotyrosine. T235 is a substrate binding site.

This sequence belongs to the LDH/MDH superfamily. LDH family. As to quaternary structure, homotetramer.

It localises to the cytoplasm. It carries out the reaction (S)-lactate + NAD(+) = pyruvate + NADH + H(+). Its pathway is fermentation; pyruvate fermentation to lactate; (S)-lactate from pyruvate: step 1/1. With respect to regulation, allosterically activated by fructose 1,6-bisphosphate (FBP). Its function is as follows. Catalyzes the conversion of lactate to pyruvate. This is L-lactate dehydrogenase from Streptococcus mutans serotype c (strain ATCC 700610 / UA159).